We begin with the raw amino-acid sequence, 989 residues long: Vacuolar membrane protease (989 aa).

The interval 1 to 25 (MDRQSLRTTLRAMDASNENGSAKGA) is disordered. The Cytoplasmic segment spans residues 1-41 (MDRQSLRTTLRAMDASNENGSAKGAKKTTIGSFVRWTFGFN). Residues 42–62 (SVPLTTLVTITTVLLGLLVYV) traverse the membrane as a helical segment. Residues 63 to 383 (STSVNPPDVT…YLFIILPLQY (321 aa)) are Vacuolar-facing. Histidine 181 and aspartate 193 together coordinate Zn(2+). The active-site Proton acceptor is the glutamate 227. Glutamate 228 lines the Zn(2+) pocket. N-linked (GlcNAc...) asparagine glycosylation occurs at asparagine 245. Zn(2+)-binding residues include glutamate 253 and histidine 325. The helical transmembrane segment at 384-404 (IFVISCLTLAVGPIFVGFLFL) threads the bilayer. Residues 405-426 (LVLRKQINAGTSETILGGWLRS) lie on the Cytoplasmic side of the membrane. A helical transmembrane segment spans residues 427-447 (IVSVLVSVVATYFVVETLHLG). The Vacuolar segment spans residues 448–460 (NELYVVRSFYTPL). Residues 461 to 481 (FAGLGTFIFVNYVLLGFFHFV) traverse the membrane as a helical segment. Residues 482 to 488 (RPVCDQK) are Cytoplasmic-facing. The helical transmembrane segment at 489-509 (LIILLELSVVLWVLLLLSVIH) threads the bilayer. The Vacuolar portion of the chain corresponds to 510–520 (EATHKATGEYH). The helical transmembrane segment at 521-541 (FLILYIVVATASILGLFGHLV) threads the bilayer. Residues 542 to 611 (TSTETSTFVE…IAVSMGYDWS (70 aa)) are Cytoplasmic-facing. The interval 548–576 (TFVEGPEDEEDTVDASEATETSPLLPEAS) is disordered. A compositionally biased stretch (acidic residues) spans 552-561 (GPEDEEDTVD). Residues 612-632 (IQFLLVVPITFFVTFGLAASL) traverse the membrane as a helical segment. At 633–648 (LDGLHQTPLESEKSAD) the chain is on the vacuolar side. Residues 649–669 (FVYTTITAMSVLVGITFLPFV) traverse the membrane as a helical segment. Over 670 to 673 (HKLQ) the chain is Cytoplasmic. The chain crosses the membrane as a helical span at residues 674–694 (VFVPIVVVGVAVTASFVHILS). The Vacuolar portion of the chain corresponds to 695-989 (PPFSSNAPAK…LVEVSKYVEL (295 aa)). Residues asparagine 745, asparagine 793, and asparagine 822 are each glycosylated (N-linked (GlcNAc...) asparagine).

This sequence belongs to the peptidase M28 family. Zn(2+) serves as cofactor.

It is found in the vacuole membrane. In terms of biological role, may be involved in vacuolar sorting and osmoregulation. This Yarrowia lipolytica (strain CLIB 122 / E 150) (Yeast) protein is Vacuolar membrane protease.